The following is a 99-amino-acid chain: MNPANYLILSALLFTIGTVGVLVRRNAIVVFMSVELMLNAVNLTLVTFSRIHGTLDGQIMAFFVMVVAAAEVVIGLAIILSIFRTRRSASVDDVNLLKY.

3 helical membrane passes run 3–23, 28–48, and 59–79; these read PANYLILSALLFTIGTVGVLV, IVVFMSVELMLNAVNLTLVTF, and IMAFFVMVVAAAEVVIGLAII.

Belongs to the complex I subunit 4L family. As to quaternary structure, NDH-1 is composed of 14 different subunits. Subunits NuoA, H, J, K, L, M, N constitute the membrane sector of the complex.

Its subcellular location is the cell membrane. It carries out the reaction a quinone + NADH + 5 H(+)(in) = a quinol + NAD(+) + 4 H(+)(out). Functionally, NDH-1 shuttles electrons from NADH, via FMN and iron-sulfur (Fe-S) centers, to quinones in the respiratory chain. The immediate electron acceptor for the enzyme in this species is believed to be a menaquinone. Couples the redox reaction to proton translocation (for every two electrons transferred, four hydrogen ions are translocated across the cytoplasmic membrane), and thus conserves the redox energy in a proton gradient. The polypeptide is NADH-quinone oxidoreductase subunit K (Frankia casuarinae (strain DSM 45818 / CECT 9043 / HFP020203 / CcI3)).